The primary structure comprises 124 residues: MARLVGVDLPRDKRMEIALTYIYGVGRTRSNEILAATGIDRNLRTRDLTDDQLTHLRDYIEANLKIEGDLRREVQADIRRKIEIGCYQGLRHRRGLPVRGQRTKTNARTRKGPKRTIAGKKKAR.

The interval 95–124 is disordered; sequence GLPVRGQRTKTNARTRKGPKRTIAGKKKAR.

This sequence belongs to the universal ribosomal protein uS13 family. In terms of assembly, part of the 30S ribosomal subunit. Forms a loose heterodimer with protein S19. Forms two bridges to the 50S subunit in the 70S ribosome.

In terms of biological role, located at the top of the head of the 30S subunit, it contacts several helices of the 16S rRNA. In the 70S ribosome it contacts the 23S rRNA (bridge B1a) and protein L5 of the 50S subunit (bridge B1b), connecting the 2 subunits; these bridges are implicated in subunit movement. Contacts the tRNAs in the A and P-sites. In Mycobacterium marinum (strain ATCC BAA-535 / M), this protein is Small ribosomal subunit protein uS13.